Here is a 133-residue protein sequence, read N- to C-terminus: S-protein homolog 9 (133 aa).

An N-terminal signal peptide occupies residues 1-20 (MNRLSCFLLVIGLCIGLSNA).

This sequence belongs to the plant self-incompatibility (S1) protein family.

It localises to the secreted. The chain is S-protein homolog 9 from Arabidopsis thaliana (Mouse-ear cress).